Consider the following 213-residue polypeptide: MAETEIPTQLYLISPLDVRGGFPQRLERALEAGRGVVTAFQFRVKGIDQHEAARLAEPLQAICAAHDVAFVVNDSIALAKRLKADGVHLGQDDGSPKEAREQLGREAQIGVTCHASRHLAMEAGEAGADYVAFGAFFDSATKDKGDAEQPTLELLEWWSQVFEIPCVAIGGITPDNCQPLIEAGADFLAVSGAVWSGDERAAVQAFAEQIAAA.

Residues 41-45 (QFRVK) and Asn-73 contribute to the 4-amino-2-methyl-5-(diphosphooxymethyl)pyrimidine site. Residues Asp-74 and Asp-93 each contribute to the Mg(2+) site. Thr-112 is a 4-amino-2-methyl-5-(diphosphooxymethyl)pyrimidine binding site. Residue 139-141 (SAT) participates in 2-[(2R,5Z)-2-carboxy-4-methylthiazol-5(2H)-ylidene]ethyl phosphate binding. 4-amino-2-methyl-5-(diphosphooxymethyl)pyrimidine is bound at residue Lys-142. Gly-171 provides a ligand contact to 2-[(2R,5Z)-2-carboxy-4-methylthiazol-5(2H)-ylidene]ethyl phosphate.

This sequence belongs to the thiamine-phosphate synthase family. Mg(2+) is required as a cofactor.

The enzyme catalyses 2-[(2R,5Z)-2-carboxy-4-methylthiazol-5(2H)-ylidene]ethyl phosphate + 4-amino-2-methyl-5-(diphosphooxymethyl)pyrimidine + 2 H(+) = thiamine phosphate + CO2 + diphosphate. It catalyses the reaction 2-(2-carboxy-4-methylthiazol-5-yl)ethyl phosphate + 4-amino-2-methyl-5-(diphosphooxymethyl)pyrimidine + 2 H(+) = thiamine phosphate + CO2 + diphosphate. It carries out the reaction 4-methyl-5-(2-phosphooxyethyl)-thiazole + 4-amino-2-methyl-5-(diphosphooxymethyl)pyrimidine + H(+) = thiamine phosphate + diphosphate. The protein operates within cofactor biosynthesis; thiamine diphosphate biosynthesis; thiamine phosphate from 4-amino-2-methyl-5-diphosphomethylpyrimidine and 4-methyl-5-(2-phosphoethyl)-thiazole: step 1/1. In terms of biological role, condenses 4-methyl-5-(beta-hydroxyethyl)thiazole monophosphate (THZ-P) and 2-methyl-4-amino-5-hydroxymethyl pyrimidine pyrophosphate (HMP-PP) to form thiamine monophosphate (TMP). The sequence is that of Thiamine-phosphate synthase from Erythrobacter litoralis (strain HTCC2594).